The following is a 360-amino-acid chain: Peptide chain release factor 1 (360 aa).

Q235 bears the N5-methylglutamine mark. Residues K284 to E304 are disordered.

Belongs to the prokaryotic/mitochondrial release factor family. In terms of processing, methylated by PrmC. Methylation increases the termination efficiency of RF1.

The protein localises to the cytoplasm. Functionally, peptide chain release factor 1 directs the termination of translation in response to the peptide chain termination codons UAG and UAA. The protein is Peptide chain release factor 1 of Agrobacterium fabrum (strain C58 / ATCC 33970) (Agrobacterium tumefaciens (strain C58)).